Consider the following 582-residue polypeptide: Semenogelin-2 (582 aa).

The first 23 residues, 1 to 23 (MKSIILFVLSLLLILEKQAAVMG), serve as a signal peptide directing secretion. 5 disordered regions span residues 25–65 (KGGS…SSSI), 91–157 (HKTT…GISS), 171–192 (LSKE…GSQS), 272–366 (NLNQ…KDIQ), and 393–557 (SNQD…HNTV). Over residues 50–59 (GQKDKQHTES) the composition is skewed to basic and acidic residues. The segment covering 111-134 (QKGRDHVKPKRHFRLIVIHRKGGQ) has biased composition (basic residues). Polar residues-rich tracts occupy residues 137-157 (HGTQ…GISS) and 174-192 (EQAS…GSQS). Residues 293-310 (TEERQFNHGEKSVQKDVP) are compositionally biased toward basic and acidic residues. Residues 325–335 (KSQNQVSIPSQ) show a composition bias toward polar residues. 4 stretches are compositionally biased toward basic and acidic residues: residues 336 to 345 (DQEHGHKENK), 353 to 366 (TEER…KDIQ), 396 to 405 (DQEHGHKENK), and 413 to 426 (TEER…KDIQ). Polar residues-rich tracts occupy residues 427-437 (KSVSKGSISIQ) and 445-455 (KSQNQVTIPSQ). Residues 456–465 (DQEHGHKENK) are compositionally biased toward basic and acidic residues. Polar residues-rich tracts occupy residues 487–498 (KDVSQSSLSFQT) and 506–529 (SQIQ…NSGK). The span at 530–546 (SADREQDLLSHEQESRY) shows a compositional bias: basic and acidic residues. Over residues 547–557 (QQKSSGAHNTV) the composition is skewed to polar residues.

It belongs to the semenogelin family. In terms of assembly, interacts with SERPINA5.

The protein resides in the secreted. Functionally, participates in the formation of a gel matrix (sperm coagulum) entrapping the accessory gland secretions and ejaculated spermatozoa. The polypeptide is Semenogelin-2 (SEMG2) (Colobus guereza (Mantled guereza)).